The chain runs to 80 residues: Sulfur carrier protein TusA (80 aa).

Catalysis depends on C17, which acts as the Cysteine persulfide intermediate.

The protein belongs to the sulfur carrier protein TusA family.

It is found in the cytoplasm. Its function is as follows. Sulfur carrier protein which probably makes part of a sulfur-relay system. This chain is Sulfur carrier protein TusA, found in Pseudomonas putida (strain W619).